The chain runs to 519 residues: MIOREX complex component 12 (519 aa).

Residues 1–35 constitute a mitochondrion transit peptide; the sequence is MLRSLHSAATLSNKRFYSLISHSNRKNIIKKLLRH.

As to quaternary structure, associates with the mitochondrial ribosome.

The protein localises to the mitochondrion. Functionally, component of MIOREX complexes, large expressome-like assemblies of ribosomes with factors involved in all the steps of post-transcriptional gene expression. This is MIOREX complex component 12 from Saccharomyces cerevisiae (strain ATCC 204508 / S288c) (Baker's yeast).